We begin with the raw amino-acid sequence, 965 residues long: Meiosis-specific coiled-coil domain-containing protein MEIOC (965 aa).

2 disordered regions span residues 1–22 (MEVS…EGPE) and 946–965 (VHES…TSKH). Residues 949–965 (SINSSNPMNQRGETSKH) are compositionally biased toward polar residues.

Interacts with YTHDC2; binds transcripts that regulate the mitotic cell cycle inhibiting progression into metaphase, thereby allowing meiotic prophase to proceed normally. Interacts with RBM46. In terms of tissue distribution, expressed specifically in fetal ovary and postnatal and adult testes (at protein level). In adult testis expressed in spermatocytes, beginning in preleptotene and extending through most stages of meiotic prophase I, including leptotene, zygotene, and pachytene.

The protein localises to the cytoplasm. It is found in the nucleus. Its function is as follows. Is required for meiosis completion in both male and female germ cells. Confers stability to numerous meiotic mRNAs in gonads allowing proper initiation and progression into meiosis prophase I. The function may involve YTHDC2 and is independent of induction by retinoic acid (RA). Maintains an extended meiotic prophase I by properly promoting the transition from a mitotic to a meiotic cell cycle program by binding transcripts through its interaction with YTHDC2 that regulate the mitotic cell cycle. This Mus musculus (Mouse) protein is Meiosis-specific coiled-coil domain-containing protein MEIOC.